The chain runs to 252 residues: MLTKRIVAALDIKEGRVVKGVQFENIRDAGDPVELAKKYEKDGVDEIVFLDITASKEKRNILKNLVEEIAKELFIPFTVGGGLKTVEQMVEIIKCGADKVFINSAAVENPNLIKESSKIIGSSNVVVAIDAKKDVESEKYYVYTHGGSKKTDLDAVEWARKCQELGAGELLVTSMNTDGVKKGYDLNLTKQIVDAVEIPVIASGGAGEVKDFIDVFQIGADAALAASIFHYGIYTAKDLKIQLKKVGINVRL.

Catalysis depends on residues D11 and D130.

The protein belongs to the HisA/HisF family. In terms of assembly, heterodimer of HisH and HisF.

It is found in the cytoplasm. The enzyme catalyses 5-[(5-phospho-1-deoxy-D-ribulos-1-ylimino)methylamino]-1-(5-phospho-beta-D-ribosyl)imidazole-4-carboxamide + L-glutamine = D-erythro-1-(imidazol-4-yl)glycerol 3-phosphate + 5-amino-1-(5-phospho-beta-D-ribosyl)imidazole-4-carboxamide + L-glutamate + H(+). The protein operates within amino-acid biosynthesis; L-histidine biosynthesis; L-histidine from 5-phospho-alpha-D-ribose 1-diphosphate: step 5/9. IGPS catalyzes the conversion of PRFAR and glutamine to IGP, AICAR and glutamate. The HisF subunit catalyzes the cyclization activity that produces IGP and AICAR from PRFAR using the ammonia provided by the HisH subunit. This is Imidazole glycerol phosphate synthase subunit HisF from Petrotoga mobilis (strain DSM 10674 / SJ95).